A 356-amino-acid chain; its full sequence is GTPase HflX (356 aa).

The 177-residue stretch at 180 to 356 (PSIGIVGYTN…KIYQLATQLS (177 aa)) folds into the Hflx-type G domain. GTP-binding positions include 186–193 (GYTNSGKT), 211–215 (FTTMS), 232–235 (DTVG), 300–303 (NKID), and 334–336 (SAL). T193 and T213 together coordinate Mg(2+).

The protein belongs to the TRAFAC class OBG-HflX-like GTPase superfamily. HflX GTPase family. In terms of assembly, monomer. Associates with the 50S ribosomal subunit. Does not associate with 70S ribosomes. Mg(2+) serves as cofactor.

It localises to the cytoplasm. Its activity is regulated as follows. GTPase activity is stimulated by the presence of 50S ribosomal subunits. Hydrolysis is probably regulated by the HflX N-terminal domain. Functionally, GTPase that associates with the 50S ribosomal subunit and may have a role during protein synthesis or ribosome biogenesis. Specific for GTP. This Saccharolobus solfataricus (strain ATCC 35092 / DSM 1617 / JCM 11322 / P2) (Sulfolobus solfataricus) protein is GTPase HflX.